The following is a 180-amino-acid chain: Cytokinin-beta-glucosidase 4 (180 aa).

Its function is as follows. Hydrolyzes cytokinin glucosides thus liberating free cytokinins. The sequence is that of Cytokinin-beta-glucosidase 4 (ROLC4) from Panax ginseng (Korean ginseng).